A 310-amino-acid polypeptide reads, in one-letter code: uncharacterized protein (310 aa).

Helical transmembrane passes span 10-30 (AVLSIGAALATMGLKLGAYAI), 44-64 (TVNLASAIVAFWALSLAATPA), 78-98 (FSSGLEGAFIFVAALGIGYSA), 113-133 (LGIALAIAATALNGTVAWILW), and 161-181 (VVVAVALIFVTGWEWLDPLIA). The span at 285-297 (PLEDPKSWQHPDE) shows a compositional bias: basic and acidic residues. The interval 285–310 (PLEDPKSWQHPDEFPPSAPLNRDKPN) is disordered.

This sequence belongs to the cation diffusion facilitator (CDF) transporter (TC 2.A.4) family.

Its subcellular location is the cell membrane. This is an uncharacterized protein from Synechocystis sp. (strain ATCC 27184 / PCC 6803 / Kazusa).